Here is a 288-residue protein sequence, read N- to C-terminus: Histone-lysine N-methyltransferase Suv4-20 (288 aa).

The region spanning 128 to 238 is the SET domain; sequence QECKRYSQEG…PGDEITCFYG (111 aa).

Belongs to the class V-like SAM-binding methyltransferase superfamily. Histone-lysine methyltransferase family. Suvar4-20 subfamily.

The protein resides in the nucleus. It localises to the chromosome. The catalysed reaction is N(6)-methyl-L-lysyl(20)-[histone H4] + S-adenosyl-L-methionine = N(6),N(6)-dimethyl-L-lysyl(20)-[histone H4] + S-adenosyl-L-homocysteine + H(+). It carries out the reaction N(6),N(6)-dimethyl-L-lysyl(20)-[histone H4] + S-adenosyl-L-methionine = N(6),N(6),N(6)-trimethyl-L-lysyl(20)-[histone H4] + S-adenosyl-L-homocysteine + H(+). Its function is as follows. Histone methyltransferase that specifically di- and trimethylates 'Lys-20' of histone H4 (H4K20me2/me3). H4 'Lys-20' trimethylation represents a specific tag for epigenetic transcriptional repression. Contributes to dosage compensation of X chromosome-relative to autosome-linked gene expression, possibly by converting H4K20me1 to H4K20m2/me3 on autosomes. Involved in the regulation of growth and body fat metabolism downstream of the TOR complex 2 pathway. The chain is Histone-lysine N-methyltransferase Suv4-20 (set-4) from Caenorhabditis elegans.